Reading from the N-terminus, the 231-residue chain is 7-cyano-7-deazaguanine synthase (231 aa).

8 to 18 (FSGGQDSTTCL) is a binding site for ATP. The Zn(2+) site is built by Cys-188, Cys-197, Cys-200, and Cys-203.

It belongs to the QueC family. It depends on Zn(2+) as a cofactor.

The catalysed reaction is 7-carboxy-7-deazaguanine + NH4(+) + ATP = 7-cyano-7-deazaguanine + ADP + phosphate + H2O + H(+). Its pathway is purine metabolism; 7-cyano-7-deazaguanine biosynthesis. Its function is as follows. Catalyzes the ATP-dependent conversion of 7-carboxy-7-deazaguanine (CDG) to 7-cyano-7-deazaguanine (preQ(0)). In Enterobacter sp. (strain 638), this protein is 7-cyano-7-deazaguanine synthase.